A 581-amino-acid chain; its full sequence is Leucine aminopeptidase 3, chloroplastic (581 aa).

The N-terminal 50 residues, 1-50, are a transit peptide targeting the chloroplast; that stretch reads MAVTLVTSCASSSRFHFRSFSSSPSSLSSCFVRFQLLSRLRVSFAITPLY. The Mn(2+) site is built by K350 and D355. K362 is an active-site residue. Residues D375, D435, and E437 each contribute to the Mn(2+) site. Residue R439 is part of the active site.

This sequence belongs to the peptidase M17 family. In terms of assembly, homohexamer (dimer of homotrimers). It depends on Mn(2+) as a cofactor.

Its subcellular location is the plastid. The protein resides in the chloroplast. The enzyme catalyses Release of an N-terminal amino acid, Xaa-|-Yaa-, in which Xaa is preferably Leu, but may be other amino acids including Pro although not Arg or Lys, and Yaa may be Pro. Amino acid amides and methyl esters are also readily hydrolyzed, but rates on arylamides are exceedingly low.. It catalyses the reaction Release of N-terminal proline from a peptide.. In terms of biological role, presumably involved in the processing and regular turnover of intracellular proteins. Catalyzes the removal of unsubstituted N-terminal amino acids from various peptides. Possesses Cys-Gly dipeptidase activity. This is Leucine aminopeptidase 3, chloroplastic from Arabidopsis thaliana (Mouse-ear cress).